We begin with the raw amino-acid sequence, 211 residues long: Small ribosomal subunit protein uS3c (211 aa).

One can recognise a KH type-2 domain in the interval 39–109 (IREFAESRLP…NVALYVTKTQ (71 aa)).

Belongs to the universal ribosomal protein uS3 family. As to quaternary structure, part of the 30S ribosomal subunit.

It is found in the plastid. The protein localises to the chloroplast. This is Small ribosomal subunit protein uS3c (rps3) from Ostreococcus tauri.